Reading from the N-terminus, the 283-residue chain is Small ribosomal subunit protein uS2B (283 aa).

The segment at 254 to 283 (GQVGQSAWDEEGDWNTTGAAQTSDWANTVA) is disordered. Polar residues predominate over residues 267-283 (WNTTGAAQTSDWANTVA).

This sequence belongs to the universal ribosomal protein uS2 family. As to quaternary structure, component of the small ribosomal subunit. Mature ribosomes consist of a small (40S) and a large (60S) subunit. The 40S subunit contains about 33 different proteins and 1 molecule of RNA (18S). The 60S subunit contains about 49 different proteins and 3 molecules of RNA (25S, 5.8S and 5S). Interacts with rps21.

Its subcellular location is the cytoplasm. Functionally, required for the assembly and/or stability of the 40S ribosomal subunit. Required for the processing of the 20S rRNA-precursor to mature 18S rRNA in a late step of the maturation of 40S ribosomal subunits. This Schizosaccharomyces japonicus (strain yFS275 / FY16936) (Fission yeast) protein is Small ribosomal subunit protein uS2B (rps0b).